A 600-amino-acid chain; its full sequence is NADH-quinone oxidoreductase subunit C/D (600 aa).

An NADH dehydrogenase I subunit C region spans residues 1 to 190; that stretch reads MIDLMPKKNT…EPFFLNEQKE (190 aa). The tract at residues 214–600 is NADH dehydrogenase I subunit D; sequence EFMFLNLGPN…IDFVMSDVDR (387 aa).

The protein in the N-terminal section; belongs to the complex I 30 kDa subunit family. In the C-terminal section; belongs to the complex I 49 kDa subunit family. NDH-1 is composed of 13 different subunits. Subunits NuoB, CD, E, F, and G constitute the peripheral sector of the complex.

The protein resides in the cell membrane. The enzyme catalyses a quinone + NADH + 5 H(+)(in) = a quinol + NAD(+) + 4 H(+)(out). Its function is as follows. NDH-1 shuttles electrons from NADH, via FMN and iron-sulfur (Fe-S) centers, to quinones in the respiratory chain. The immediate electron acceptor for the enzyme in this species is believed to be ubiquinone. Couples the redox reaction to proton translocation (for every two electrons transferred, four hydrogen ions are translocated across the cytoplasmic membrane), and thus conserves the redox energy in a proton gradient. The chain is NADH-quinone oxidoreductase subunit C/D from Buchnera aphidicola subsp. Acyrthosiphon pisum (strain Tuc7).